The primary structure comprises 260 residues: Isoprenyl transferase (260 aa).

Residue aspartate 38 is part of the active site. Residue aspartate 38 coordinates Mg(2+). Substrate contacts are provided by residues 39 to 42 (GNGR), tryptophan 43, arginine 51, histidine 55, and 83 to 85 (STE). Asparagine 86 acts as the Proton acceptor in catalysis. Substrate contacts are provided by residues tryptophan 87, arginine 89, arginine 206, and 212 to 214 (RLS). Mg(2+) is bound at residue glutamate 225.

It belongs to the UPP synthase family. In terms of assembly, homodimer. The cofactor is Mg(2+).

In terms of biological role, catalyzes the condensation of isopentenyl diphosphate (IPP) with allylic pyrophosphates generating different type of terpenoids. In Heliobacterium mobile (Heliobacillus mobilis), this protein is Isoprenyl transferase.